The following is a 383-amino-acid chain: 8-amino-7-oxononanoate synthase (383 aa).

A substrate-binding site is contributed by arginine 23. 110–111 is a pyridoxal 5'-phosphate binding site; that stretch reads GF. Histidine 135 is a substrate binding site. Positions 181, 209, and 235 each coordinate pyridoxal 5'-phosphate. Residue lysine 238 is modified to N6-(pyridoxal phosphate)lysine. Position 351 (threonine 351) interacts with substrate.

This sequence belongs to the class-II pyridoxal-phosphate-dependent aminotransferase family. BioF subfamily. In terms of assembly, homodimer. The cofactor is pyridoxal 5'-phosphate.

The enzyme catalyses 6-carboxyhexanoyl-[ACP] + L-alanine + H(+) = (8S)-8-amino-7-oxononanoate + holo-[ACP] + CO2. It participates in cofactor biosynthesis; biotin biosynthesis. In terms of biological role, catalyzes the decarboxylative condensation of pimeloyl-[acyl-carrier protein] and L-alanine to produce 8-amino-7-oxononanoate (AON), [acyl-carrier protein], and carbon dioxide. The polypeptide is 8-amino-7-oxononanoate synthase (Aliivibrio fischeri (strain MJ11) (Vibrio fischeri)).